The sequence spans 303 residues: Proteasome subunit beta (303 aa).

Positions 1–64 are cleaved as a propeptide — removed in mature form; by autocatalysis; that stretch reads MTWPDRDTSA…VTPSDAVPHG (64 aa). Residue T65 is the Nucleophile of the active site.

This sequence belongs to the peptidase T1B family. In terms of assembly, the 20S proteasome core is composed of 14 alpha and 14 beta subunits that assemble into four stacked heptameric rings, resulting in a barrel-shaped structure. The two inner rings, each composed of seven catalytic beta subunits, are sandwiched by two outer rings, each composed of seven alpha subunits. The catalytic chamber with the active sites is on the inside of the barrel. Has a gated structure, the ends of the cylinder being occluded by the N-termini of the alpha-subunits. Is capped by the proteasome-associated ATPase, ARC.

The protein resides in the cytoplasm. It carries out the reaction Cleavage of peptide bonds with very broad specificity.. It functions in the pathway protein degradation; proteasomal Pup-dependent pathway. With respect to regulation, the formation of the proteasomal ATPase ARC-20S proteasome complex, likely via the docking of the C-termini of ARC into the intersubunit pockets in the alpha-rings, may trigger opening of the gate for substrate entry. Interconversion between the open-gate and close-gate conformations leads to a dynamic regulation of the 20S proteasome proteolysis activity. Its function is as follows. Component of the proteasome core, a large protease complex with broad specificity involved in protein degradation. The chain is Proteasome subunit beta from Mycolicibacterium gilvum (strain PYR-GCK) (Mycobacterium gilvum (strain PYR-GCK)).